A 210-amino-acid chain; its full sequence is Scoloptoxin SSD558 (210 aa).

The N-terminal stretch at 1 to 23 is a signal peptide; it reads MNILLPSTLFVLLMFQIIGSGMG.

Contains 3 disulfide bonds. As to expression, expressed by the venom gland.

The protein resides in the secreted. This is Scoloptoxin SSD558 from Scolopendra dehaani (Thai centipede).